Here is a 1136-residue protein sequence, read N- to C-terminus: Rho GTPase-activating protein 45 (1136 aa).

Disordered regions lie at residues 1–73 (MFSR…RHAS) and 91–110 (HRSP…GAGP). Residues Ser-23, Ser-25, Ser-73, Ser-93, and Ser-99 each carry the phosphoserine modification. An F-BAR domain is found at 269–539 (EEVDVLLQRC…SSKLYDPGQQ (271 aa)). Coiled coils occupy residues 376–412 (EHEK…YVQR) and 440–499 (TATK…RQSD). Phosphoserine is present on residues Ser-569, Ser-578, Ser-592, and Ser-619. Positions 583–662 (DVARPEAAGS…SSTEELVDPD (80 aa)) are disordered. A compositionally biased stretch (low complexity) spans 646 to 655 (TSSSGTMSST). The segment at 702 to 747 (THRLRKLRTPAKCRECNSYVYFQGAECEECCLACHKKCLETLAIQC) adopts a Phorbol-ester/DAG-type zinc-finger fold. A Rho-GAP domain is found at 761-974 (QDFSHAARSA…TLIVHYGLVF (214 aa)). 4 positions are modified to phosphoserine: Ser-949, Ser-1027, Ser-1030, and Ser-1032. The segment at 1061–1136 (EASLEVASGS…SCRERQPEFV (76 aa)) is disordered. Residues 1095-1109 (QQLSGFNTNQSNNVL) show a composition bias toward polar residues.

HA-1 forms a complex with MHC class I HLA-A*0201. As to expression, expressed on cells of the hematopoietic lineage. Detected in dendritic cells and epidermal Langerhans cells. Expressed in peripheral blood mononuclear cells, in all leukemia/lymphoma cell lines. Detected also in some solid tumors and tissues such as cancerous and non-cancerous tissue.

The protein resides in the cytoplasm. It localises to the cell projection. The protein localises to the ruffle membrane. Functionally, contains a GTPase activator for the Rho-type GTPases (RhoGAP) domain that would be able to negatively regulate the actin cytoskeleton as well as cell spreading. However, also contains N-terminally a BAR-domin which is able to play an autoinhibitory effect on this RhoGAP activity. Its function is as follows. Precursor of the histocompatibility antigen HA-1. More generally, minor histocompatibility antigens (mHags) refer to immunogenic peptide which, when complexed with MHC, can generate an immune response after recognition by specific T-cells. The peptides are derived from polymorphic intracellular proteins, which are cleaved by normal pathways of antigen processing. The binding of these peptides to MHC class I or class II molecules and its expression on the cell surface can stimulate T-cell responses and thereby trigger graft rejection or graft-versus-host disease (GVHD) after hematopoietic stem cell transplantation from HLA-identical sibling donor. GVHD is a frequent complication after bone marrow transplantation (BMT), due to mismatch of minor histocompatibility antigen in HLA-matched sibling marrow transplants. Specifically, mismatching for mHag HA-1 which is recognized as immunodominant, is shown to be associated with the development of severe GVHD after HLA-identical BMT. HA-1 is presented to the cell surface by MHC class I HLA-A*0201, but also by other HLA-A alleles. This complex specifically elicits donor-cytotoxic T-lymphocyte (CTL) reactivity against hematologic malignancies after treatment by HLA-identical allogenic BMT. It induces cell recognition and lysis by CTL. This Homo sapiens (Human) protein is Rho GTPase-activating protein 45.